The chain runs to 292 residues: Lipoyl synthase (292 aa).

[4Fe-4S] cluster is bound by residues Cys38, Cys43, Cys49, Cys64, Cys68, Cys71, and Ser277. Positions 50–266 (WSKGTATFML…KNRAESLGFR (217 aa)) constitute a Radical SAM core domain.

This sequence belongs to the radical SAM superfamily. Lipoyl synthase family. Requires [4Fe-4S] cluster as cofactor.

Its subcellular location is the cytoplasm. It carries out the reaction [[Fe-S] cluster scaffold protein carrying a second [4Fe-4S](2+) cluster] + N(6)-octanoyl-L-lysyl-[protein] + 2 oxidized [2Fe-2S]-[ferredoxin] + 2 S-adenosyl-L-methionine + 4 H(+) = [[Fe-S] cluster scaffold protein] + N(6)-[(R)-dihydrolipoyl]-L-lysyl-[protein] + 4 Fe(3+) + 2 hydrogen sulfide + 2 5'-deoxyadenosine + 2 L-methionine + 2 reduced [2Fe-2S]-[ferredoxin]. It participates in protein modification; protein lipoylation via endogenous pathway; protein N(6)-(lipoyl)lysine from octanoyl-[acyl-carrier-protein]: step 2/2. Functionally, catalyzes the radical-mediated insertion of two sulfur atoms into the C-6 and C-8 positions of the octanoyl moiety bound to the lipoyl domains of lipoate-dependent enzymes, thereby converting the octanoylated domains into lipoylated derivatives. The sequence is that of Lipoyl synthase from Chlorobium limicola (strain DSM 245 / NBRC 103803 / 6330).